A 336-amino-acid chain; its full sequence is Fructose-1,6-bisphosphatase class 1 (336 aa).

Positions 90, 112, 114, and 115 each coordinate Mg(2+). Residues 115-118, asparagine 211, and lysine 277 contribute to the substrate site; that span reads DGSS. Glutamate 283 contacts Mg(2+).

The protein belongs to the FBPase class 1 family. Homotetramer. Mg(2+) serves as cofactor.

The protein resides in the cytoplasm. The catalysed reaction is beta-D-fructose 1,6-bisphosphate + H2O = beta-D-fructose 6-phosphate + phosphate. It functions in the pathway carbohydrate biosynthesis; gluconeogenesis. The chain is Fructose-1,6-bisphosphatase class 1 from Pseudomonas putida (strain ATCC 700007 / DSM 6899 / JCM 31910 / BCRC 17059 / LMG 24140 / F1).